The primary structure comprises 100 residues: Urease subunit gamma (100 aa).

Belongs to the urease gamma subunit family. Heterotrimer of UreA (gamma), UreB (beta) and UreC (alpha) subunits. Three heterotrimers associate to form the active enzyme.

It localises to the cytoplasm. The catalysed reaction is urea + 2 H2O + H(+) = hydrogencarbonate + 2 NH4(+). It functions in the pathway nitrogen metabolism; urea degradation; CO(2) and NH(3) from urea (urease route): step 1/1. In Stutzerimonas stutzeri (strain A1501) (Pseudomonas stutzeri), this protein is Urease subunit gamma.